The following is a 498-amino-acid chain: Glutamate--tRNA ligase (498 aa).

Residues 12-22 (PSPTGHLHIGN) carry the 'HIGH' region motif. The 'KMSKS' region motif lies at 259 to 263 (KLSKR). Lysine 262 is a binding site for ATP.

Belongs to the class-I aminoacyl-tRNA synthetase family. Glutamate--tRNA ligase type 1 subfamily. As to quaternary structure, monomer.

It localises to the cytoplasm. It catalyses the reaction tRNA(Glu) + L-glutamate + ATP = L-glutamyl-tRNA(Glu) + AMP + diphosphate. Its function is as follows. Catalyzes the attachment of glutamate to tRNA(Glu) in a two-step reaction: glutamate is first activated by ATP to form Glu-AMP and then transferred to the acceptor end of tRNA(Glu). The polypeptide is Glutamate--tRNA ligase (Limosilactobacillus fermentum (strain NBRC 3956 / LMG 18251) (Lactobacillus fermentum)).